A 141-amino-acid polypeptide reads, in one-letter code: Small ribosomal subunit protein eS17w (141 aa).

Belongs to the eukaryotic ribosomal protein eS17 family.

In Arabidopsis thaliana (Mouse-ear cress), this protein is Small ribosomal subunit protein eS17w (RPS17D).